We begin with the raw amino-acid sequence, 173 residues long: Ribosome maturation factor RimP (173 aa).

The protein belongs to the RimP family.

The protein localises to the cytoplasm. Its function is as follows. Required for maturation of 30S ribosomal subunits. The sequence is that of Ribosome maturation factor RimP from Chlorobaculum tepidum (strain ATCC 49652 / DSM 12025 / NBRC 103806 / TLS) (Chlorobium tepidum).